The sequence spans 372 residues: Putative glutamate--cysteine ligase 2 (372 aa).

The protein belongs to the glutamate--cysteine ligase type 2 family. YbdK subfamily.

It catalyses the reaction L-cysteine + L-glutamate + ATP = gamma-L-glutamyl-L-cysteine + ADP + phosphate + H(+). Its function is as follows. ATP-dependent carboxylate-amine ligase which exhibits weak glutamate--cysteine ligase activity. This chain is Putative glutamate--cysteine ligase 2, found in Cupriavidus metallidurans (strain ATCC 43123 / DSM 2839 / NBRC 102507 / CH34) (Ralstonia metallidurans).